Consider the following 186-residue polypeptide: MKLKKNDRRVAIKEAIELNPFITDYELCEKFDVSIQTIRLDRTHLNIPELRKRIKLVAEQNYGRIKSIEANEIIGDLIQVNPDVSAQSLIEITIDSVFAKSEIARGHVLFAQANSLCVALIHKPIVLTHESQVEFKEKVKLNDTVRADARVIDITDKHYIIEVNSYVSDMLVFKGKFKMYYTSEDE.

The protein belongs to the FapR family.

In terms of biological role, transcriptional factor involved in regulation of membrane lipid biosynthesis by repressing genes involved in fatty acid and phospholipid metabolism. The sequence is that of Transcription factor FapR from Staphylococcus epidermidis (strain ATCC 35984 / DSM 28319 / BCRC 17069 / CCUG 31568 / BM 3577 / RP62A).